A 702-amino-acid chain; its full sequence is Mesothelin-like protein (702 aa).

A signal peptide spans 1–35 (MAAAVTIPGPRIGALQSSGLTLLLSLAAHCSGPQA). Residues 36–638 (KVLSPGGLDA…AQASTSGSLW (603 aa)) are Extracellular-facing. Residues asparagine 122, asparagine 307, and asparagine 424 are each glycosylated (N-linked (GlcNAc...) asparagine). The tract at residues 588 to 611 (QLGLDASPTSPTGPAHGTRGPPST) is disordered. Residues 639–668 (APLGYLPLAMALPCSLLCLLHWGTCILVSV) traverse the membrane as a helical segment. Topologically, residues 669-702 (DSVASGWLGSQGSGAGKTEVLDSAGRPLGLTGQL) are cytoplasmic.

This sequence belongs to the mesothelin family.

The protein localises to the membrane. In terms of biological role, may play a role in cellular adhesion. This chain is Mesothelin-like protein (MSLNL), found in Homo sapiens (Human).